We begin with the raw amino-acid sequence, 316 residues long: Apolipoprotein E (316 aa).

A signal peptide spans Met1–Ala18. Residue Thr32 is glycosylated (O-linked (GalNAc...) threonine). 8 repeat units span residues Ala79–Gly100, Pro101–Gly122, Ser123–Gly144, Gln145–Leu166, Arg167–Glu188, Arg189–Ala210, Thr211–His232, and Gly233–Glu254. The tract at residues Ala79–Glu254 is 8 X 22 AA approximate tandem repeats. At Met142 the chain carries Methionine sulfoxide. The residue at position 146 (Ser146) is a Phosphoserine. The segment at His157–Arg167 is LDL and other lipoprotein receptors binding. Leu161–Arg164 lines the heparin pocket. Residues Ala209–Met289 are lipid-binding and lipoprotein association. The O-linked (GalNAc...) threonine glycan is linked to Thr211. Residue Arg228 to Leu235 participates in heparin binding. The segment at Asn265–His316 is homooligomerization. The specificity for association with VLDL stretch occupies residues Arg277–Met289. A glycan (O-linked (GalNAc...) threonine) is linked at Thr309. An O-linked (GalNAc...) serine glycan is attached at Ser310.

Belongs to the apolipoprotein A1/A4/E family. Homotetramer. May interact with ABCA1; functionally associated with ABCA1 in the biogenesis of HDLs. May interact with APP/A4 amyloid-beta peptide; the interaction is extremely stable in vitro but its physiological significance is unclear. May interact with MAPT. May interact with MAP2. In the cerebrospinal fluid, interacts with secreted SORL1. Interacts with PMEL; this allows the loading of PMEL luminal fragment on ILVs to induce fibril nucleation. Post-translationally, APOE exists as multiple glycosylated and sialylated glycoforms within cells and in plasma. The extent of glycosylation and sialylation are tissue and context specific. In terms of processing, glycated in plasma VLDL. Phosphorylated by FAM20C in the extracellular medium.

It localises to the secreted. The protein resides in the extracellular space. The protein localises to the extracellular matrix. Its subcellular location is the extracellular vesicle. It is found in the endosome. It localises to the multivesicular body. APOE is an apolipoprotein, a protein associating with lipid particles, that mainly functions in lipoprotein-mediated lipid transport between organs via the plasma and interstitial fluids. APOE is a core component of plasma lipoproteins and is involved in their production, conversion and clearance. Apolipoproteins are amphipathic molecules that interact both with lipids of the lipoprotein particle core and the aqueous environment of the plasma. As such, APOE associates with chylomicrons, chylomicron remnants, very low density lipoproteins (VLDL) and intermediate density lipoproteins (IDL) but shows a preferential binding to high-density lipoproteins (HDL). It also binds a wide range of cellular receptors including the LDL receptor/LDLR and the very low-density lipoprotein receptor/VLDLR that mediate the cellular uptake of the APOE-containing lipoprotein particles. Finally, APOE also has a heparin-binding activity and binds heparan-sulfate proteoglycans on the surface of cells, a property that supports the capture and the receptor-mediated uptake of APOE-containing lipoproteins by cells. This Bos taurus (Bovine) protein is Apolipoprotein E (APOE).